The primary structure comprises 126 residues: Small ribosomal subunit protein uS12m (126 aa).

Polar residues predominate over residues 1 to 11 (MATSNQMGANT). The segment at 1–21 (MATSNQMGANTRSKKKKKNLK) is disordered. Over residues 12-21 (RSKKKKKNLK) the composition is skewed to basic residues.

Belongs to the universal ribosomal protein uS12 family.

The protein resides in the mitochondrion. Functionally, protein S12 is involved in the translation initiation step. The polypeptide is Small ribosomal subunit protein uS12m (RPS12) (Bigelowiella natans (Pedinomonas minutissima)).